Reading from the N-terminus, the 312-residue chain is Ribosomal protein L11 methyltransferase (312 aa).

S-adenosyl-L-methionine-binding residues include T160, G181, D203, and N246.

It belongs to the methyltransferase superfamily. PrmA family.

The protein localises to the cytoplasm. It carries out the reaction L-lysyl-[protein] + 3 S-adenosyl-L-methionine = N(6),N(6),N(6)-trimethyl-L-lysyl-[protein] + 3 S-adenosyl-L-homocysteine + 3 H(+). Its function is as follows. Methylates ribosomal protein L11. The polypeptide is Ribosomal protein L11 methyltransferase (Staphylococcus aureus (strain bovine RF122 / ET3-1)).